Consider the following 221-residue polypeptide: Ribosomal RNA small subunit methyltransferase Nep1 (221 aa).

S-adenosyl-L-methionine-binding positions include glycine 174, glycine 179, and leucine 196 to methionine 201.

Belongs to the class IV-like SAM-binding methyltransferase superfamily. RNA methyltransferase NEP1 family. As to quaternary structure, homodimer.

It carries out the reaction a pseudouridine in rRNA + S-adenosyl-L-methionine = an N(1)-methylpseudouridine in rRNA + S-adenosyl-L-homocysteine + H(+). Its function is as follows. Methyltransferase involved in ribosomal biogenesis. Specifically catalyzes the N1-methylation of the pseudouridine corresponding to position 914 in M.jannaschii 16S rRNA. This chain is Ribosomal RNA small subunit methyltransferase Nep1, found in Pyrobaculum arsenaticum (strain DSM 13514 / JCM 11321 / PZ6).